The chain runs to 652 residues: Acetyl-coenzyme A synthetase (652 aa).

CoA-binding positions include 191–194 and T311; that span reads RAGN. Residues 387–389, 411–416, D503, and R518 each bind ATP; these read GEP and DTWWQT. S526 contacts CoA. R529 contacts ATP. Residues V540, H542, and V545 each coordinate Mg(2+). A CoA-binding site is contributed by R587. K613 is modified (N6-acetyllysine).

This sequence belongs to the ATP-dependent AMP-binding enzyme family. Mg(2+) serves as cofactor. Acetylated. Deacetylation by the SIR2-homolog deacetylase activates the enzyme.

It carries out the reaction acetate + ATP + CoA = acetyl-CoA + AMP + diphosphate. Functionally, catalyzes the conversion of acetate into acetyl-CoA (AcCoA), an essential intermediate at the junction of anabolic and catabolic pathways. AcsA undergoes a two-step reaction. In the first half reaction, AcsA combines acetate with ATP to form acetyl-adenylate (AcAMP) intermediate. In the second half reaction, it can then transfer the acetyl group from AcAMP to the sulfhydryl group of CoA, forming the product AcCoA. This is Acetyl-coenzyme A synthetase from Marinomonas sp. (strain MWYL1).